The following is a 362-amino-acid chain: Protein indeterminate-domain 16 (362 aa).

The tract at residues 1-22 (MELTQPIRENGDPQGHQLTDPD) is disordered. C2H2-type zinc fingers lie at residues 39 to 61 (YVCE…RRRH) and 82 to 112 (YVCP…RRKH). The CCHC-type 1; atypical zinc-finger motif lies at 118 to 142 (WVCERCSKGYAVQSDYKAHLKTCGS). 8 residues coordinate Zn(2+): cysteine 120, cysteine 123, histidine 136, cysteine 140, cysteine 147, cysteine 149, histidine 162, and cysteine 166. The CCHC-type 2; atypical zinc-finger motif lies at 145 to 168 (HSCDCGRVFSRVESFIEHQDTCTI). An SHR-binding region spans residues 155 to 167 (RVESFIEHQDTCT). Residues 247–278 (SAQARHNEKRETSLTKERANEEARKAEETRQE) form a disordered region. Positions 251-278 (RHNEKRETSLTKERANEEARKAEETRQE) are enriched in basic and acidic residues. The stretch at 252 to 319 (HNEKRETSLT…VREEAIKRIN (68 aa)) forms a coiled coil.

In terms of tissue distribution, highly expressed in leaves, hypocotyls, roots, vasculature of cotyledons, floral organs and in the endodermis and vasculaturenof inflorescence stems.

It is found in the nucleus. Its function is as follows. Transcription factor regulating lateral organ morphogenesis and gravitropic responses. Has a redundant role with IDD14 in directing leaf and floral organ morphogenesis. Acts cooperatively with IDD15 to control silique and branche orientation. Involved in the establishment of auxin gradients through the regulation of auxin biosynthesis and transport. The protein is Protein indeterminate-domain 16 of Arabidopsis thaliana (Mouse-ear cress).